A 23-amino-acid polypeptide reads, in one-letter code: Nephrotoxin PsTX-115 (23 aa).

Its subcellular location is the secreted. It localises to the nematocyst. Its function is as follows. Nephrotoxin. When injected intravenously in rats, causes severe destructive glomerular changes. At 24 hours post-injection partial disruption of the glomerular basement membrane, massive thrombus formation in glomerular capillaries, severe mesangiolysis and infiltrating cells were observed in the majority of glomeruli. The protein is Nephrotoxin PsTX-115 of Phyllodiscus semoni (Night anemone).